Consider the following 1888-residue polypeptide: Fatty acid synthase subunit alpha (1888 aa).

Positions 98 to 118 are disordered; that stretch reads DLAPVEEPNAEEQTGAAATPA. A Carrier domain is found at 146-221; the sequence is VKASLLLHVL…ETFQDTFAGS (76 aa). S181 carries the O-(pantetheine 4'-phosphoryl)serine modification. Residues 675–874 are beta-ketoacyl reductase; that stretch reads DKYVLITGAG…CGAIIGWTRG (200 aa). The region spanning 1119 to 1657 is the Ketosynthase family 3 (KS3) domain; the sequence is KQMIQEVVIE…QKGAQAVAVH (539 aa). Residues C1305, H1542, and H1583 each act as for beta-ketoacyl synthase activity in the active site. Positions 1774, 1775, and 1776 each coordinate Mg(2+). Residues 1774 to 1776, Y1800, S1810, 1819 to 1829, 1843 to 1846, and 1873 to 1875 contribute to the acetyl-CoA site; these read DVE, EAVFKSLGVKS, REAG, and ISH. Mg(2+)-binding residues include S1874 and H1875.

The protein belongs to the thiolase-like superfamily. Fungal fatty acid synthetase subunit alpha family. As to quaternary structure, fatty acid synthase is composed of alpha and beta subunits.

It carries out the reaction acetyl-CoA + n malonyl-CoA + 2n NADPH + 4n H(+) = a long-chain-acyl-CoA + n CoA + n CO2 + 2n NADP(+).. The enzyme catalyses a fatty acyl-[ACP] + malonyl-[ACP] + H(+) = a 3-oxoacyl-[ACP] + holo-[ACP] + CO2. It catalyses the reaction a (3R)-hydroxyacyl-[ACP] + NADP(+) = a 3-oxoacyl-[ACP] + NADPH + H(+). In terms of biological role, fatty acid synthetase catalyzes the formation of long-chain fatty acids from acetyl-CoA, malonyl-CoA and NADPH. The alpha subunit contains domains for: acyl carrier protein, 3-oxoacyl-[acyl-carrier-protein] reductase, and 3-oxoacyl-[acyl-carrier-protein] synthase. In this species, higher amounts of C18 than C16 fatty acids are produced. This is Fatty acid synthase subunit alpha (FAS2) from Lachancea kluyveri (Yeast).